A 599-amino-acid chain; its full sequence is Purine-uracil permease NCS1 (599 aa).

The next 12 membrane-spanning stretches (helical) occupy residues 140 to 160, 164 to 184, 218 to 238, 257 to 277, 293 to 313, 327 to 347, 363 to 383, 411 to 433, 445 to 465, 474 to 494, 525 to 545, and 560 to 580; these read LWIGLVVGVPTYYLAGSLVDL, WWQGIATVVTANLILLVPLVL, LVGCGWYGIETWIGGEAIFLL, TSPLEFSCFIVFWLAQLCIVW, ILISLTSCLLAWSYLKAGGFG, FWTLFFPSLTANISFWATLAL, IIGQVGLPVFMGLFTFVGVAV, TLLAIVGISLATLTTNIAANVVA, FFTFGRGAFLTAVLGIVFQPW, FVYTWLIGYSALLGPIGGIIL, YNVAAVVALVAGIIPVVPGFL, and VVYDNALFFSFIIAGFVYWII.

The protein belongs to the purine-cytosine permease (2.A.39) family. As to expression, expressed in roots, leaves, stems, flowers, siliques and seeds.

The protein localises to the plastid. It is found in the chloroplast envelope. The protein resides in the chloroplast membrane. Nucleobase-proton symporter that facilitates the uptake of nucleobases in the cells. Can transport adenine, guanine and uracil. Contributes to uracil import into plastids for plastidic uracil salvage which is essential for plant growth and development. The polypeptide is Purine-uracil permease NCS1 (Arabidopsis thaliana (Mouse-ear cress)).